The sequence spans 150 residues: NADH-quinone oxidoreductase subunit A (150 aa).

A run of 3 helical transmembrane segments spans residues 14–34, 66–86, and 96–116; these read FAVFLIGAIGLCGLMLLGAFF, FYLVAMFFVIFDVEALYLYAW, and IGFIEATIFILVLLAGLVYLV.

Belongs to the complex I subunit 3 family. NDH-1 is composed of 13 different subunits. Subunits NuoA, H, J, K, L, M, N constitute the membrane sector of the complex.

It localises to the cell inner membrane. It catalyses the reaction a quinone + NADH + 5 H(+)(in) = a quinol + NAD(+) + 4 H(+)(out). In terms of biological role, NDH-1 shuttles electrons from NADH, via FMN and iron-sulfur (Fe-S) centers, to quinones in the respiratory chain. The immediate electron acceptor for the enzyme in this species is believed to be ubiquinone. Couples the redox reaction to proton translocation (for every two electrons transferred, four hydrogen ions are translocated across the cytoplasmic membrane), and thus conserves the redox energy in a proton gradient. The sequence is that of NADH-quinone oxidoreductase subunit A from Yersinia enterocolitica serotype O:8 / biotype 1B (strain NCTC 13174 / 8081).